Consider the following 140-residue polypeptide: UPF0225 protein SAV_6631 (140 aa).

The tract at residues 1-22 is disordered; that stretch reads MSKSRRTRSTSRPTSRPQPASC. A compositionally biased stretch (low complexity) spans 10-19; that stretch reads TSRPTSRPQP.

It belongs to the UPF0225 family.

This Streptomyces avermitilis (strain ATCC 31267 / DSM 46492 / JCM 5070 / NBRC 14893 / NCIMB 12804 / NRRL 8165 / MA-4680) protein is UPF0225 protein SAV_6631.